Consider the following 454-residue polypeptide: Probable xylan O-acetyltransferase 9 (454 aa).

The Cytoplasmic portion of the chain corresponds to 1 to 15; sequence MKAPPPPSPVAKRAR. A helical; Signal-anchor for type II membrane protein membrane pass occupies residues 16–36; that stretch reads VSPFVFLLVLFLLLFSFLYGE. At 37–454 the chain is on the lumenal side; that stretch reads DLKELLGSQA…ELLYTKLFYP (418 aa). Disulfide bonds link cysteine 101-cysteine 152, cysteine 123-cysteine 188, cysteine 132-cysteine 435, and cysteine 352-cysteine 431. Residues 175–177 carry the GDS motif motif; the sequence is GDS. The active-site Nucleophile is serine 177. 3 N-linked (GlcNAc...) asparagine glycosylation sites follow: asparagine 219, asparagine 293, and asparagine 394. The Proton donor role is filled by aspartate 430. The DXXH motif signature appears at 430–433; it reads DCVH. Histidine 433 (proton acceptor) is an active-site residue.

It belongs to the PC-esterase family. TBL subfamily.

It localises to the golgi apparatus membrane. Functionally, probable xylan acetyltransferase required for 2-O- and 3-O-monoacetylation of xylosyl residues in xylan. Possesses extremely low activity in vitro. The polypeptide is Probable xylan O-acetyltransferase 9 (Oryza sativa subsp. japonica (Rice)).